Reading from the N-terminus, the 500-residue chain is Protein DETOXIFICATION 24 (500 aa).

The segment at 1–20 (MSTQEEMEERLLREGSDAEG) is disordered. 12 consecutive transmembrane segments (helical) span residues 48-67 (SSLF…AFIG), 72-92 (LGLA…YGLM), 124-144 (IVDM…GPIL), 160-180 (IYPW…IQMY), 188-208 (AIVG…TWWC), 225-245 (VGSW…WCPF), 266-286 (ISSG…VLMA), 298-318 (AFSI…GFLG), 342-362 (VILT…LAFC), 384-404 (VILA…GVAV), 411-431 (IVAV…GLIL), and 441-461 (GLWS…CYII).

The protein belongs to the multi antimicrobial extrusion (MATE) (TC 2.A.66.1) family.

Its subcellular location is the membrane. In Arabidopsis thaliana (Mouse-ear cress), this protein is Protein DETOXIFICATION 24.